Here is a 333-residue protein sequence, read N- to C-terminus: Late embryogenesis abundant protein 1 (333 aa).

Disordered regions lie at residues 1–20 (MASRQDRREARAEADARRAA) and 116–246 (KDYT…GQGQ). Positions 3–52 (SRQDRREARAEADARRAAEEIARARDERVMQAEVDARSAADEIARARADR) form a coiled coil. Basic and acidic residues-rich tracts occupy residues 116-163 (KDYT…KDAV), 172-219 (EATK…DATK), and 227-241 (DKARETAATHDDATD).

This sequence belongs to the LEA type 4 family.

In Oryza sativa subsp. indica (Rice), this protein is Late embryogenesis abundant protein 1 (LEA1).